The following is a 151-amino-acid chain: Abdominal ganglion neuropeptide L11 (151 aa).

A signal peptide spans 1–25 (MPCTPNSHRLLLVTALCLLITSLFA).

The protein localises to the secreted. This chain is Abdominal ganglion neuropeptide L11, found in Aplysia californica (California sea hare).